The following is a 632-amino-acid chain: Maltase 1 (632 aa).

Positions 1 to 29 are enriched in basic and acidic residues; the sequence is MEEGERWREGHVYQRSSETRKPTNYDRPD. The tract at residues 1 to 30 is disordered; sequence MEEGERWREGHVYQRSSETRKPTNYDRPDS. Residues Asn-179 and Asn-212 are each glycosylated (N-linked (GlcNAc...) asparagine). The Nucleophile role is filled by Asp-280. An N-linked (GlcNAc...) asparagine glycan is attached at Asn-333. Glu-348 (proton donor) is an active-site residue. Residues Asn-461, Asn-575, and Asn-578 are each glycosylated (N-linked (GlcNAc...) asparagine).

The protein belongs to the glycosyl hydrolase 13 family.

It catalyses the reaction Hydrolysis of terminal, non-reducing (1-&gt;4)-linked alpha-D-glucose residues with release of alpha-D-glucose.. The chain is Maltase 1 (Mal-B1) from Drosophila virilis (Fruit fly).